A 101-amino-acid chain; its full sequence is uncharacterized protein (101 aa).

Residues 68 to 90 (LAFAFCGRANTFISCFISFASLI) form a helical membrane-spanning segment.

It is found in the membrane. This is an uncharacterized protein from Saccharomyces cerevisiae (strain ATCC 204508 / S288c) (Baker's yeast).